The primary structure comprises 112 residues: Protein FAM32A (112 aa).

The disordered stretch occupies residues 23–56 (TKRKKKKKDKDKAKMLEAMGTSKKNEEEKRRCLD). A compositionally biased stretch (basic and acidic residues) spans 45–56 (KKNEEEKRRCLD).

This sequence belongs to the FAM32 family.

It localises to the nucleus. Functionally, may induce G2 arrest and apoptosis. May also increase cell sensitivity to apoptotic stimuli. The polypeptide is Protein FAM32A (Fam32a) (Rattus norvegicus (Rat)).